A 188-amino-acid polypeptide reads, in one-letter code: Putative protein SSX9 (188 aa).

A KRAB-related domain is found at 20–83 (KIQKAFDDIA…TGATDLQGND (64 aa)). A disordered region spans residues 114 to 165 (KKPAEVGNDSKEVPEASGLQNDGKQLCPPGKPTTSEKINKASGPKRGKHAWT). Basic and acidic residues predominate over residues 115–127 (KPAEVGNDSKEVP). A Phosphoserine modification is found at S123. Over residues 156–165 (GPKRGKHAWT) the composition is skewed to basic residues.

The protein belongs to the SSX family. As to expression, not detected in any normal or tumor tissues.

In terms of biological role, could act as a modulator of transcription. The polypeptide is Putative protein SSX9 (Homo sapiens (Human)).